A 292-amino-acid polypeptide reads, in one-letter code: Probable ABC transporter permease protein YurN (292 aa).

Transmembrane regions (helical) follow at residues 7 to 27 (IIPYLFLVPALVFLLFVYIPI), 70 to 90 (VLYAVISIVCQVFGGLILAAV), 106 to 126 (VFFLPVVISMTVIALLFDFIY), 160 to 180 (VIFVSQWQSVGYIAMLYIVSI), 215 to 235 (FVAVVMTLTGAFTVFNEPYIL), and 260 to 280 (MMGYASAIATVVLIITLALSL). In terms of domain architecture, ABC transmembrane type-1 spans 66–282 (LTNNVLYAVI…IITLALSLMQ (217 aa)).

This sequence belongs to the binding-protein-dependent transport system permease family. MalFG subfamily.

It is found in the cell membrane. Functionally, probably part of the binding-protein-dependent transport system YurMNO. Probably responsible for the translocation of the substrate across the membrane. The chain is Probable ABC transporter permease protein YurN (yurN) from Bacillus subtilis (strain 168).